Reading from the N-terminus, the 105-residue chain is ATP-dependent Clp protease adapter protein ClpS (105 aa).

Belongs to the ClpS family. As to quaternary structure, binds to the N-terminal domain of the chaperone ClpA.

Involved in the modulation of the specificity of the ClpAP-mediated ATP-dependent protein degradation. This Aeromonas hydrophila subsp. hydrophila (strain ATCC 7966 / DSM 30187 / BCRC 13018 / CCUG 14551 / JCM 1027 / KCTC 2358 / NCIMB 9240 / NCTC 8049) protein is ATP-dependent Clp protease adapter protein ClpS.